The following is a 536-amino-acid chain: G-protein coupled receptor Mth2 (536 aa).

At 1 to 210 (MAERDHYHTI…DDNSTVKIIN (210 aa)) the chain is on the extracellular side. Disulfide bonds link C17-C71, C73-C78, C82-C177, C83-C96, and C138-C197. N-linked (GlcNAc...) asparagine glycans are attached at residues N24 and N33. N103, N113, N118, N159, N184, and N203 each carry an N-linked (GlcNAc...) asparagine glycan. Residues 211 to 231 (AYAMMFSIPFMMLTIAVYLLI) traverse the membrane as a helical segment. At 232-241 (PELRNQHGKS) the chain is on the cytoplasmic side. A helical transmembrane segment spans residues 242–262 (LVCYLVGLTVGYTSLCYVQLY). Residues 263-273 (QVDATGDACKV) lie on the Extracellular side of the membrane. The helical transmembrane segment at 274 to 294 (FGYTAYFFFMGAYMWLSVISF) threads the bilayer. Over 295–314 (DLWHNFRGTRGINRFQEKKR) the chain is Cytoplasmic. The helical transmembrane segment at 315-335 (FLFYSLYSWGIAVVFLAFTYI) threads the bilayer. Over 336-365 (AQELTNLPAYLKPGIGDGVYCWLDMSNWAA) the chain is Extracellular. A helical transmembrane segment spans residues 366-386 (MIYFYGPILVIVVANTIMFIM). The Cytoplasmic portion of the chain corresponds to 387–417 (TAIKIHGVQREMARIIASENSTKNLRTEKDK). A helical membrane pass occupies residues 418 to 438 (FGLFLRLFLIMGITWLTELIS). Topologically, residues 439–449 (YFVGSDKGWSK) are extracellular. The helical transmembrane segment at 450–470 (LFYISDLANAMQGFLIFMLFV) threads the bilayer. Residues 471–536 (MKKKVKHLIT…VDPQKTTIFR (66 aa)) are Cytoplasmic-facing. Positions 487-506 (RDGSNQRQSQYSTKTTSSSV) are disordered. Residues 492-505 (QRQSQYSTKTTSSS) are compositionally biased toward low complexity.

Belongs to the G-protein coupled receptor 2 family. Mth subfamily. In terms of assembly, homodimer.

It is found in the cell membrane. Functionally, involved in biological aging and stress response. Essential for adult survival. The protein is G-protein coupled receptor Mth2 (mth2) of Drosophila yakuba (Fruit fly).